A 600-amino-acid polypeptide reads, in one-letter code: Baculoviral IAP repeat-containing protein 3 (600 aa).

One copy of the BIR 1 repeat lies at 27 to 94 (ELYRLSTYSA…RKLYPSCNFV (68 aa)). Residue serine 138 is modified to Phosphoserine. BIR repeat units lie at residues 167–233 (EKAR…CPFL) and 253–320 (HAAR…CEYL). Positions 290, 293, 310, and 317 each coordinate Zn(2+). The region spanning 436 to 525 (EESDDLALIR…ALYRDIFVQQ (90 aa)) is the CARD domain. An RING-type zinc finger spans residues 553–588 (CKVCMDREVSIVFIPCGHLVVCKDCAPSLRKCPICR).

Belongs to the IAP family. As to quaternary structure, interacts with PRSS25; the interaction inhibits apoptotic suppressor activity. The BIR motifs region interacts with TNF receptor associated factors 1 and 2 (TRAF1 and TRAF2) to form a heteromeric complex, which is then recruited to the tumor necrosis factor receptor 2 (TNFR2). Interaction with TRAF2 is required for ubiquitination of IKBKE, degradation of NFKBIA and activation of NF-kappa-B. Interacts with RIP1, RIP2, RIP3, RIP4 and USP19. Post-translationally, auto-ubiquitinated and degraded by the proteasome in apoptotic cells.

It is found in the cytoplasm. The protein localises to the nucleus. It catalyses the reaction S-ubiquitinyl-[E2 ubiquitin-conjugating enzyme]-L-cysteine + [acceptor protein]-L-lysine = [E2 ubiquitin-conjugating enzyme]-L-cysteine + N(6)-ubiquitinyl-[acceptor protein]-L-lysine.. Its activity is regulated as follows. USP19 regulates the stability of BIRC3/c-IAP2 by preventing its ubiquitination. In terms of biological role, multi-functional protein which regulates not only caspases and apoptosis, but also modulates inflammatory signaling and immunity, mitogenic kinase signaling and cell proliferation, as well as cell invasion and metastasis. Acts as an E3 ubiquitin-protein ligase regulating NF-kappa-B signaling and regulates both canonical and non-canonical NF-kappa-B signaling by acting in opposite directions: acts as a positive regulator of the canonical pathway and suppresses constitutive activation of non-canonical NF-kappa-B signaling. The target proteins for its E3 ubiquitin-protein ligase activity include: RIPK1, RIPK2, RIPK3, RIPK4, CASP3, CASP7, CASP8, IKBKE, TRAF1, and BCL10. Acts as an important regulator of innate immune signaling via regulation of Toll-like receptors (TLRs), Nodlike receptors (NLRs) and RIG-I like receptors (RLRs), collectively referred to as pattern recognition receptors (PRRs). Protects cells from spontaneous formation of the ripoptosome, a large multi-protein complex that has the capability to kill cancer cells in a caspase-dependent and caspase-independent manner. Suppresses ripoptosome formation by ubiquitinating RIPK1 and CASP8. The sequence is that of Baculoviral IAP repeat-containing protein 3 (Birc3) from Mus musculus (Mouse).